We begin with the raw amino-acid sequence, 213 residues long: Protein SRN2 (213 aa).

One can recognise a VPS37 C-terminal domain in the interval 128–213 (SKYVASWQDY…TWDKQGNLKY (86 aa)).

The protein belongs to the VPS37 family. In terms of assembly, component of the ESCRT-I complex (endosomal sorting complex required for transport I) which consists of STP22, VPS28, SRN2 and MVB12 in a 1:1:1:1 stoichiometry. Interacts with STP22 and MVB12.

The protein resides in the cytoplasm. It localises to the endosome. It is found in the late endosome membrane. Its function is as follows. Component of the ESCRT-I complex, a regulator of vesicular trafficking process. Required for normal endocytic and biosynthetic traffic to the yeast vacuole. This chain is Protein SRN2 (SRN2), found in Saccharomyces cerevisiae (strain ATCC 204508 / S288c) (Baker's yeast).